Here is a 25-residue protein sequence, read N- to C-terminus: Alpha-lytic protease (25 aa).

This sequence belongs to the peptidase S1 family.

The catalysed reaction is Preferential cleavage: Ala-|-Xaa, Val-|-Xaa in bacterial cell walls, elastin and other proteins.. This is Alpha-lytic protease from Achromobacter lyticus.